We begin with the raw amino-acid sequence, 196 residues long: Large ribosomal subunit protein mL66 (196 aa).

The transit peptide at 1–34 directs the protein to the mitochondrion; sequence MAALNVLVSGCGRFLRGLLTGPTVTSWARPPARG.

It belongs to the bacterial ribosomal protein bS18 family. Mitochondrion-specific ribosomal protein mL66 subfamily. Component of the mitochondrial ribosome small subunit (28S) which comprises a 12S rRNA and about 30 distinct proteins.

The protein localises to the mitochondrion. This chain is Large ribosomal subunit protein mL66 (MRPS18A), found in Bos taurus (Bovine).